A 703-amino-acid polypeptide reads, in one-letter code: Calcium-responsive transcription factor (703 aa).

Disordered regions lie at residues 1–61 (MEQS…QNIP), 130–150 (GPLV…SDRN), and 517–539 (GNSQ…SLSP). Residues 9-22 (KVNHNDSEESKTDS) are compositionally biased toward basic and acidic residues. Polar residues predominate over residues 23–34 (QHLTYMDSSEPS).

It localises to the nucleus. In terms of biological role, acts as a transcriptional activator that mediates the calcium- and neuron-selective induction of BDNF exon III transcription. Binds to the consensus calcium-response element CaRE1 5'-CTATTTCGAG-3' sequence. The chain is Calcium-responsive transcription factor (CARF) from Bos taurus (Bovine).